The primary structure comprises 327 residues: uncharacterized protein (327 aa).

Residues 12–79 form the S4 RNA-binding domain; that stretch reads KRLDEFLAKE…LKKELDLEIE (68 aa). D136 is an active-site residue.

Belongs to the pseudouridine synthase RluA family.

It carries out the reaction a uridine in RNA = a pseudouridine in RNA. This is an uncharacterized protein from Helicobacter pylori (strain ATCC 700392 / 26695) (Campylobacter pylori).